Reading from the N-terminus, the 124-residue chain is Small ribosomal subunit protein uS13 (124 aa).

The interval 94–124 (GLPLRGQRTKNNSRTRKGRRKTVANKKKATK) is disordered. Over residues 100-124 (QRTKNNSRTRKGRRKTVANKKKATK) the composition is skewed to basic residues.

It belongs to the universal ribosomal protein uS13 family. Part of the 30S ribosomal subunit. Forms a loose heterodimer with protein S19. Forms two bridges to the 50S subunit in the 70S ribosome.

Functionally, located at the top of the head of the 30S subunit, it contacts several helices of the 16S rRNA. In the 70S ribosome it contacts the 23S rRNA (bridge B1a) and protein L5 of the 50S subunit (bridge B1b), connecting the 2 subunits; these bridges are implicated in subunit movement. Contacts the tRNAs in the A and P-sites. This is Small ribosomal subunit protein uS13 from Christiangramia forsetii (strain DSM 17595 / CGMCC 1.15422 / KT0803) (Gramella forsetii).